The primary structure comprises 233 residues: Antiholin-like protein LrgB (233 aa).

7 helical membrane passes run 9 to 29, 34 to 54, 63 to 83, 97 to 117, 121 to 141, 144 to 164, and 212 to 232; these read TPYF…ILFE, FFLF…LYLT, IGGD…AIPL, IIGG…TFAK, FAND…IALP, AGIG…GVII, and IALV…VAIF.

The protein belongs to the CidB/LrgB family. LrgB subfamily.

It is found in the cell membrane. Its function is as follows. Inhibits the expression or activity of extracellular murein hydrolases by interacting, possibly with LrgA, with the holin-like proteins CidA and/or CidB. The LrgAB and CidAB proteins may affect the proton motive force of the membrane. May be involved in programmed cell death (PCD), possibly triggering PCD in response to antibiotics and environmental stresses. The protein is Antiholin-like protein LrgB of Staphylococcus aureus (strain Mu3 / ATCC 700698).